A 394-amino-acid polypeptide reads, in one-letter code: Acetate kinase (394 aa).

Asparagine 7 is a Mg(2+) binding site. Lysine 14 contacts ATP. Arginine 90 provides a ligand contact to substrate. Aspartate 147 (proton donor/acceptor) is an active-site residue. ATP contacts are provided by residues 204-208, 278-280, and 326-330; these read HLGNG, DLR, and GIGEN. Glutamate 380 serves as a coordination point for Mg(2+).

The protein belongs to the acetokinase family. In terms of assembly, homodimer. Mg(2+) serves as cofactor. The cofactor is Mn(2+).

The protein localises to the cytoplasm. The catalysed reaction is acetate + ATP = acetyl phosphate + ADP. Its pathway is metabolic intermediate biosynthesis; acetyl-CoA biosynthesis; acetyl-CoA from acetate: step 1/2. Functionally, catalyzes the formation of acetyl phosphate from acetate and ATP. Can also catalyze the reverse reaction. The sequence is that of Acetate kinase from Flavobacterium johnsoniae (strain ATCC 17061 / DSM 2064 / JCM 8514 / BCRC 14874 / CCUG 350202 / NBRC 14942 / NCIMB 11054 / UW101) (Cytophaga johnsonae).